A 114-amino-acid polypeptide reads, in one-letter code: Cytokine SCM-1 beta (114 aa).

An N-terminal signal peptide occupies residues Met1–Gly21. A disulfide bridge links Cys32 with Cys69. The disordered stretch occupies residues Arg91–Gly114.

Belongs to the intercrine gamma family.

The protein localises to the secreted. In terms of biological role, chemotactic activity for lymphocytes but not for monocytes or neutrophils. The polypeptide is Cytokine SCM-1 beta (XCL2) (Homo sapiens (Human)).